A 1411-amino-acid polypeptide reads, in one-letter code: Protein RhsB (1411 aa).

A run of 28 repeats spans residues 330–352, 353–374, 375–417, 418–438, 439–460, 461–481, 482–502, 503–525, 526–546, 547–567, 568–588, 589–609, 610–629, 630–650, 651–671, 672–691, 692–711, 712–734, 735–758, 808–828, 829–850, 851–871, 872–894, 895–930, 931–959, 960–984, 985–1019, and 1162–1186. Residues 330–1186 form a 28 X approximate tandem repeats region; sequence GKQVRSFTYD…LNEENPHQLQ (857 aa).

This sequence belongs to the RHS family.

In terms of biological role, rhs elements have a nonessential function. They may play an important role in the natural ecology of the cell. The polypeptide is Protein RhsB (rhsB) (Escherichia coli (strain K12)).